We begin with the raw amino-acid sequence, 302 residues long: Sulfate adenylyltransferase subunit 2 (302 aa).

The interval 280 to 302 is disordered; that stretch reads RQGRLIDSDQSASMEQKKRQGYF.

Belongs to the PAPS reductase family. CysD subfamily. As to quaternary structure, heterodimer composed of CysD, the smaller subunit, and CysN.

It carries out the reaction sulfate + ATP + H(+) = adenosine 5'-phosphosulfate + diphosphate. It participates in sulfur metabolism; hydrogen sulfide biosynthesis; sulfite from sulfate: step 1/3. Its function is as follows. With CysN forms the ATP sulfurylase (ATPS) that catalyzes the adenylation of sulfate producing adenosine 5'-phosphosulfate (APS) and diphosphate, the first enzymatic step in sulfur assimilation pathway. APS synthesis involves the formation of a high-energy phosphoric-sulfuric acid anhydride bond driven by GTP hydrolysis by CysN coupled to ATP hydrolysis by CysD. The chain is Sulfate adenylyltransferase subunit 2 from Shewanella frigidimarina (strain NCIMB 400).